The primary structure comprises 462 residues: UDP-N-acetylmuramoylalanine--D-glutamate ligase (462 aa).

111 to 117 (GTNGKTT) is a binding site for ATP.

Belongs to the MurCDEF family.

It localises to the cytoplasm. It catalyses the reaction UDP-N-acetyl-alpha-D-muramoyl-L-alanine + D-glutamate + ATP = UDP-N-acetyl-alpha-D-muramoyl-L-alanyl-D-glutamate + ADP + phosphate + H(+). The protein operates within cell wall biogenesis; peptidoglycan biosynthesis. Cell wall formation. Catalyzes the addition of glutamate to the nucleotide precursor UDP-N-acetylmuramoyl-L-alanine (UMA). The protein is UDP-N-acetylmuramoylalanine--D-glutamate ligase of Trichodesmium erythraeum (strain IMS101).